The primary structure comprises 510 residues: Zinc metalloproteinase (510 aa).

Residues 1-24 (MKSKLICIIMVIAFQAHFTMTVKA) form the signal peptide. Residues 25-200 (DSVGEEKLQN…ILKKQNMLSE (176 aa)) constitute a propeptide that is removed on maturation. His349 is a Zn(2+) binding site. Glu350 is a catalytic residue. Positions 353 and 373 each coordinate Zn(2+). The active-site Proton donor is the His437.

Belongs to the peptidase M4 family. Zn(2+) serves as cofactor.

It localises to the secreted. Its function is as follows. Probably linked to the pathogenesis of listerial infection. This chain is Zinc metalloproteinase (mpl), found in Listeria monocytogenes serovar 1/2a (strain ATCC BAA-679 / EGD-e).